The primary structure comprises 527 residues: Heat shock factor protein HSF8 (527 aa).

A DNA-binding region spans residues 39 to 133; sequence PFLVKTYDMV…KSISRRKPAH (95 aa). Disordered regions lie at residues 128 to 158, 241 to 273, and 297 to 341; these read RRKP…HSAS, NESN…ADGQ, and SSPR…TSGK. The span at 134 to 152 shows a compositional bias: low complexity; sequence GHAQQQQQPHGNAQQQMQP. Residues 317–326 are compositionally biased toward polar residues; the sequence is SPQSNASSGR.

It belongs to the HSF family. As to quaternary structure, homotrimer. In terms of processing, exhibits temperature-dependent phosphorylation.

The protein localises to the nucleus. Its function is as follows. DNA-binding protein that specifically binds heat shock promoter elements (HSE) and activates transcription. The polypeptide is Heat shock factor protein HSF8 (HSF8) (Solanum lycopersicum (Tomato)).